The following is a 179-amino-acid chain: ATP synthase subunit delta (179 aa).

The protein belongs to the ATPase delta chain family. In terms of assembly, F-type ATPases have 2 components, F(1) - the catalytic core - and F(0) - the membrane proton channel. F(1) has five subunits: alpha(3), beta(3), gamma(1), delta(1), epsilon(1). F(0) has three main subunits: a(1), b(2) and c(10-14). The alpha and beta chains form an alternating ring which encloses part of the gamma chain. F(1) is attached to F(0) by a central stalk formed by the gamma and epsilon chains, while a peripheral stalk is formed by the delta and b chains.

Its subcellular location is the cell inner membrane. Functionally, f(1)F(0) ATP synthase produces ATP from ADP in the presence of a proton or sodium gradient. F-type ATPases consist of two structural domains, F(1) containing the extramembraneous catalytic core and F(0) containing the membrane proton channel, linked together by a central stalk and a peripheral stalk. During catalysis, ATP synthesis in the catalytic domain of F(1) is coupled via a rotary mechanism of the central stalk subunits to proton translocation. This protein is part of the stalk that links CF(0) to CF(1). It either transmits conformational changes from CF(0) to CF(1) or is implicated in proton conduction. The protein is ATP synthase subunit delta of Polaromonas naphthalenivorans (strain CJ2).